The chain runs to 606 residues: Chaperone protein DnaK (606 aa).

T174 is modified (phosphothreonine; by autocatalysis). Positions A579–N593 are enriched in polar residues. Positions A579–N606 are disordered.

The protein belongs to the heat shock protein 70 family.

Functionally, acts as a chaperone. The chain is Chaperone protein DnaK from Dictyoglomus thermophilum (strain ATCC 35947 / DSM 3960 / H-6-12).